We begin with the raw amino-acid sequence, 890 residues long: UPF0182 protein Ppro_2689 (890 aa).

7 helical membrane passes run 6 to 26, 50 to 70, 102 to 122, 157 to 177, 200 to 220, 244 to 264, and 266 to 286; these read FILILVIVALTVSLLSFLLAF, AGSGLLFAGVLFAGTLLNLLL, LGIPACAILALLVGQWGAMQW, TITAFAGFTLLTSLFLTVLVY, LAILLLLLSCVIAAGFHLDCF, TYRILTILAPLAGTALAIGLW, and GAWRMALLAPLAVIVLHVIGI.

Belongs to the UPF0182 family.

Its subcellular location is the cell membrane. This is UPF0182 protein Ppro_2689 from Pelobacter propionicus (strain DSM 2379 / NBRC 103807 / OttBd1).